A 393-amino-acid chain; its full sequence is MALKVATVAGSAAKAVLGPALLCRPWEVLGAHEVPSRNIFSEQTIPPSAKYGGRHTVTMIPGDGIGPELMLHVKSVFRHACVPVDFEEVHVSSNADEEDIRNAIMAIRRNRVALKGNIETNHNLPPSHKSRNNILRTSLDLYANVIHCKSLPGVVTRHKDIDILIVRENTEGEYSSLEHESVAGVVESLKIITKAKSLRIAEYAFKLAQESGRKKVTAVHKANIMKLGDGLFLQCCREVAARYPQITFENMIVDNTTMQLVSRPQQFDVMVMPNLYGNIVNNVCAGLVGGPGLVAGANYGHVYAVFETATRNTGKSIANKNIANPTATLLASCMMLDHLKLHSYATSIRKAVLASMDNENMHTPDIGGQGTTSEAIQDVIRHIRVINGRAVEA.

A mitochondrion-targeting transit peptide spans 1–39; it reads MALKVATVAGSAAKAVLGPALLCRPWEVLGAHEVPSRNI. Thr120 and Asn133 together coordinate citrate. The substrate site is built by Arg136, Arg167, and Asp254. Residue Asp254 coordinates Mn(2+). Asn312, Thr313, and Asn324 together coordinate ADP.

This sequence belongs to the isocitrate and isopropylmalate dehydrogenases family. In terms of assembly, heterooligomer of subunits alpha (IDH3A), beta (IDH3B), and gamma (IDH3G) in the apparent ratio of 2:1:1. The heterodimer containing one IDH3A and one IDH3B subunit and the heterodimer containing one IDH3A and one IDH3G subunit assemble into a heterotetramer (which contains two subunits of IDH3A, one of IDH3B and one of IDH3G) and further into the heterooctamer. Requires Mg(2+) as cofactor. Mn(2+) serves as cofactor.

Its subcellular location is the mitochondrion. Its activity is regulated as follows. The heterotetramer and the heterodimer composed of IDH3A and IDH3G subunits can be allosterically activated by citrate (CIT) or/and ADP, and the two activators can act independently or synergistically. The heterodimer composed of IDH3A and IDH3B subunits cannot be allosterically regulated and the allosteric regulation of the heterotetramer is through the IDH3G subunit and not the IDH3B subunit. The IDH3G subunit contains the allosteric site which consists of a CIT-binding site and an ADP-binding site, and the binding of CIT and ADP causes conformational changes at the allosteric site which are transmitted to the active site in the catalytic subunit (IDH3A) through a cascade of conformational changes at the heterodimer interface, leading to stabilization of the isocitrate-binding at the active site and thus activation of the enzyme. ATP can activate the heterotetramer and the heterodimer composed of IDH3A and IDH3G subunits at low concentrations but inhibits their activities at high concentrations, whereas ATP exhibits only inhibitory effect on the heterodimer composed of IDH3A and IDH3B subunits. Functionally, regulatory subunit which plays a role in the allosteric regulation of the enzyme catalyzing the decarboxylation of isocitrate (ICT) into alpha-ketoglutarate. The heterodimer composed of the alpha (IDH3A) and beta (IDH3B) subunits and the heterodimer composed of the alpha (IDH3A) and gamma (IDH3G) subunits, have considerable basal activity but the full activity of the heterotetramer (containing two subunits of IDH3A, one of IDH3B and one of IDH3G) requires the assembly and cooperative function of both heterodimers. In Homo sapiens (Human), this protein is Isocitrate dehydrogenase [NAD] subunit gamma, mitochondrial (IDH3G).